Reading from the N-terminus, the 349-residue chain is UDP-3-O-acylglucosamine N-acyltransferase (349 aa).

His-246 functions as the Proton acceptor in the catalytic mechanism.

This sequence belongs to the transferase hexapeptide repeat family. LpxD subfamily. In terms of assembly, homotrimer.

It catalyses the reaction a UDP-3-O-[(3R)-3-hydroxyacyl]-alpha-D-glucosamine + a (3R)-hydroxyacyl-[ACP] = a UDP-2-N,3-O-bis[(3R)-3-hydroxyacyl]-alpha-D-glucosamine + holo-[ACP] + H(+). It participates in bacterial outer membrane biogenesis; LPS lipid A biosynthesis. Its function is as follows. Catalyzes the N-acylation of UDP-3-O-acylglucosamine using 3-hydroxyacyl-ACP as the acyl donor. Is involved in the biosynthesis of lipid A, a phosphorylated glycolipid that anchors the lipopolysaccharide to the outer membrane of the cell. The protein is UDP-3-O-acylglucosamine N-acyltransferase of Nostoc sp. (strain PCC 7120 / SAG 25.82 / UTEX 2576).